The sequence spans 394 residues: MSILQVSTSSLSSSTLLSISPRKSLSSTKSCRIVRCSVEGTTVTERKVSATSEPLLLRAVKGEVVDRPPVWLMRQAGRYMKSYQTLCEKYPSFRDRSENADLVVEISLQPWKVFKPDGVILFSDILTPLSGMNIPFDIVKGKGPIIFNPPQSAADVAQVREFVPEESVPYVGEALRRLRNEVNNEAAVLGFVGAPFTLSSYVIEGGSSKNFTQIKRLAFSQPKVLHALLQKFTTSMITYIRYQADSGAQAVQIFDSWATELSPVDFEEFSLPYLKQIVEAVKQTHPNLPLILYASGSGGLLERLARTGVDVVSLDWTVDMAEGRDRLGRDIAVQGNVDPGVLFGSKEFITSRIHDTVKKAGRDKHILNLGHGIKVGTPEENVAHFFEVAQEIRY.

Residues 74–78, Phe93, Ser123, Asp124, Tyr201, Ser256, and His371 contribute to the substrate site; that span reads RQAGR.

This sequence belongs to the uroporphyrinogen decarboxylase family. Homodimer.

The protein resides in the plastid. The protein localises to the chloroplast. The catalysed reaction is uroporphyrinogen III + 4 H(+) = coproporphyrinogen III + 4 CO2. Its pathway is porphyrin-containing compound metabolism; protoporphyrin-IX biosynthesis; coproporphyrinogen-III from 5-aminolevulinate: step 4/4. It functions in the pathway porphyrin-containing compound metabolism; chlorophyll biosynthesis. Catalyzes the decarboxylation of four acetate groups of uroporphyrinogen-III to yield coproporphyrinogen-III. This is Uroporphyrinogen decarboxylase 2, chloroplastic (HEME2) from Arabidopsis thaliana (Mouse-ear cress).